A 209-amino-acid chain; its full sequence is Translation initiation factor 2 subunit beta (209 aa).

Residues 144 to 202 (TIEEGKEYVVEITEVGSSGEGRTNYKGYTIFVPGAKRGETVKVRIKKVKNDVAIGEIIE) form the TRAM domain.

It belongs to the eIF-2-beta/eIF-5 family. Heterotrimer composed of an alpha, a beta and a gamma chain.

Its function is as follows. eIF-2 functions in the early steps of protein synthesis by forming a ternary complex with GTP and initiator tRNA. The sequence is that of Translation initiation factor 2 subunit beta (eif2b) from Thermoplasma acidophilum (strain ATCC 25905 / DSM 1728 / JCM 9062 / NBRC 15155 / AMRC-C165).